Here is a 192-residue protein sequence, read N- to C-terminus: Transmembrane protein 11, mitochondrial (192 aa).

The interval 1 to 20 (MAAWGRRRLGPGSSGGSARE) is disordered. 2 consecutive transmembrane segments (helical) span residues 84–100 (TAVL…LALP) and 107–124 (ISLP…LYGI).

Belongs to the TMEM11 family. In terms of assembly, associates with the mitochondrial contact site and cristae organizing system (MICOS) complex, composed of at least MICOS10/MIC10, CHCHD3/MIC19, CHCHD6/MIC25, APOOL/MIC27, IMMT/MIC60, APOO/MIC23/MIC26 and QIL1/MIC13. This complex was also known under the names MINOS or MitOS complex. The MICOS complex associates with mitochondrial outer membrane proteins SAMM50, MTX1, MTX2 and DNAJC11, mitochondrial inner membrane protein TMEM11 and with HSPA9. Interacts with IMMT/MIC60.

The protein localises to the mitochondrion inner membrane. In terms of biological role, plays a role in mitochondrial morphogenesis. This Homo sapiens (Human) protein is Transmembrane protein 11, mitochondrial (TMEM11).